The sequence spans 231 residues: UPF0758 protein RBAM_025090 (231 aa).

The MPN domain occupies 109–231; that stretch reads VIRSPEDGAK…FVSLKEKGYL (123 aa). Positions 180, 182, and 193 each coordinate Zn(2+). The JAMM motif motif lies at 180–193; sequence HNHPSGDPTPSRED.

The protein belongs to the UPF0758 family.

The polypeptide is UPF0758 protein RBAM_025090 (Bacillus velezensis (strain DSM 23117 / BGSC 10A6 / LMG 26770 / FZB42) (Bacillus amyloliquefaciens subsp. plantarum)).